The chain runs to 174 residues: I-Kappa-B like protein C1 (174 aa).

ANK repeat units lie at residues 56 to 88 (RGRQCIHMVALYDRKNAIMKIEILVNMGADINA) and 93 to 123 (TGNSLLHIAVKTKNYELAEWLCREPTVNLGA).

It belongs to the polydnaviridae I-Kappa-B-like protein family.

Its function is as follows. Suppresses the host immune response through NF-kappa-B inactivation. Possesses ankyrin repeat domains required for NF-kappa-B binding but lacks the regulatory regions required for dissociation from NF-kappa-B and degradation. Therefore, prevents host NF-kappa-B release and subsequent activation. The protein is I-Kappa-B like protein C1 (C1) of Microplitis demolitor bracovirus (isolate Webb) (MdBV).